The following is a 449-amino-acid chain: PGL/p-HBAD biosynthesis rhamnosyltransferase (449 aa).

The protein belongs to the glycosyltransferase 28 family.

In terms of biological role, catalyzes the transfer of the first rhamnosyl residue on p-hydroxybenzoic acid or phenolphthiocerol derivatives to form, after O-methylation at position 2 of the sugar unit, mono-O-methyl-glycosyl-p-hydroxybenzoic acid derivative (p-HBAD I) and 2-O-methyl-rhamnosyl-phenolphthiocerol dimycocerosate (also called mycoside B) during p-hydroxybenzoic acid derivatives (p-HBAD) and glycosylated phenolphthiocerol dimycocerosates (PGL) biosynthesis. The chain is PGL/p-HBAD biosynthesis rhamnosyltransferase from Mycobacterium bovis (strain BCG / Pasteur 1173P2).